Here is a 428-residue protein sequence, read N- to C-terminus: MSKIANVIGFEVMDSRGNPTVMAEVVLESGVVGTACAPSGASTGSREALELRDGDKSRYLGKGVLKAVANINETIKPLLVGKDVAAQRELDDIMLKADGTENKANLGANAILAVSLAAAKAAAQDKGIPLYAHIADINGTPGKYTMPVPMMNIINGGEHADNNVDIQEFMIQPVSAPNFTEALRMGAEVFHSLKKVLAGRGLNTAVGDEGGFAPNLPSNEAALEAIAEAVAAAGYKLGEEITLALDCASSEFYKDGVYDMSGEGKKFSPEEFADYLAELASKYPILSIEDGMDESDWDGWKVLTEKIGSTCQLVGDDLFVTNTKILKEGIDKSIANSILIKFNQIGSLSETLDAIKMAQEAGYTAVISHRSGETEDTTIADLAVATAAGQIKTGSLSRSDRVAKYNRLLRIEAELGEKAPYRGRAEFK.

Gln-167 lines the (2R)-2-phosphoglycerate pocket. The Proton donor role is filled by Glu-209. Asp-246, Glu-289, and Asp-316 together coordinate Mg(2+). The (2R)-2-phosphoglycerate site is built by Lys-341, Arg-370, Ser-371, and Lys-392. Catalysis depends on Lys-341, which acts as the Proton acceptor.

This sequence belongs to the enolase family. As to quaternary structure, component of the RNA degradosome, a multiprotein complex involved in RNA processing and mRNA degradation. Mg(2+) is required as a cofactor.

Its subcellular location is the cytoplasm. It localises to the secreted. It is found in the cell surface. It catalyses the reaction (2R)-2-phosphoglycerate = phosphoenolpyruvate + H2O. It participates in carbohydrate degradation; glycolysis; pyruvate from D-glyceraldehyde 3-phosphate: step 4/5. Its function is as follows. Catalyzes the reversible conversion of 2-phosphoglycerate (2-PG) into phosphoenolpyruvate (PEP). It is essential for the degradation of carbohydrates via glycolysis. The protein is Enolase of Saccharophagus degradans (strain 2-40 / ATCC 43961 / DSM 17024).